A 612-amino-acid chain; its full sequence is Sorting nexin MVP1 (612 aa).

Residues 35–68 (SSAPSPAGSVTPARATASASEGRNIAANGNKEEG) form a disordered region. One can recognise a PX domain in the interval 226–334 (WKDQERIVVT…NIFLTSSSFE (109 aa)). A 1,2-diacyl-sn-glycero-3-phospho-(1D-myo-inositol-3-phosphate) is bound by residues Arg263, Ser265, Lys289, and Arg301.

This sequence belongs to the sorting nexin family.

The protein resides in the cytoplasm. Its subcellular location is the membrane. Its function is as follows. Required for vacuolar protein sorting. In Cryptococcus neoformans var. neoformans serotype D (strain B-3501A) (Filobasidiella neoformans), this protein is Sorting nexin MVP1 (MVP1).